The sequence spans 314 residues: Glycerol-3-phosphate dehydrogenase [NAD(P)+] (314 aa).

NADPH contacts are provided by F11, R30, and K96. Sn-glycerol 3-phosphate contacts are provided by K96, G124, and S126. A128 is a binding site for NADPH. The sn-glycerol 3-phosphate site is built by K179, D232, S242, R243, and N244. The active-site Proton acceptor is the K179. NADPH is bound at residue R243. Residue E264 coordinates NADPH.

It belongs to the NAD-dependent glycerol-3-phosphate dehydrogenase family.

The protein localises to the cytoplasm. It catalyses the reaction sn-glycerol 3-phosphate + NAD(+) = dihydroxyacetone phosphate + NADH + H(+). The enzyme catalyses sn-glycerol 3-phosphate + NADP(+) = dihydroxyacetone phosphate + NADPH + H(+). It functions in the pathway membrane lipid metabolism; glycerophospholipid metabolism. Its function is as follows. Catalyzes the reduction of the glycolytic intermediate dihydroxyacetone phosphate (DHAP) to sn-glycerol 3-phosphate (G3P), the key precursor for phospholipid synthesis. This Paracoccus denitrificans (strain Pd 1222) protein is Glycerol-3-phosphate dehydrogenase [NAD(P)+].